Consider the following 247-residue polypeptide: MKLKVIVADRQLVRPGDILAYIEEAGEVVKFKKIPDKHVYIFDNKIISDLVGVVNVSGEDIQVIPLEGVYIPRKDDLVIGIVENVGVTAWTLDIRSPYPGVLNASEVIEGFNPLIHNLRNYLDTGDFVIGRIALFDRTRDPVITVKGKGLGKITEGVVVDVKPSKIPRLIGKRGSMYNLLTSMSGCEITIAQNGFVWLKCHDENRAKVLIQAIKLIELKAHMRGLTEEVKMFLERKLGGGGSGEHQA.

The S1 motif domain maps to 75–148 (DDLVIGIVEN…RDPVITVKGK (74 aa)). Residues 154–220 (TEGVVVDVKP…QAIKLIELKA (67 aa)) form the KH domain.

The protein belongs to the RRP4 family. In terms of assembly, component of the archaeal exosome complex. Forms a trimer of Rrp4 and/or Csl4 subunits. The trimer associates with a hexameric ring-like arrangement composed of 3 Rrp41-Rrp42 heterodimers.

Its subcellular location is the cytoplasm. In terms of biological role, non-catalytic component of the exosome, which is a complex involved in RNA degradation. Increases the RNA binding and the efficiency of RNA degradation. Confers strong poly(A) specificity to the exosome. The polypeptide is Exosome complex component Rrp4 (Thermosphaera aggregans (strain DSM 11486 / M11TL)).